A 416-amino-acid chain; its full sequence is Probable glucan 1,3-beta-glucosidase A (416 aa).

The first 22 residues, 1–22 (MIFKFSQKALVALYLVVGLAEA), serve as a signal peptide directing secretion. Catalysis depends on E211, which acts as the Proton donor. Cystine bridges form between C291-C415 and C316-C342. E308 serves as the catalytic Nucleophile. N344 carries an N-linked (GlcNAc...) asparagine glycan.

The protein belongs to the glycosyl hydrolase 5 (cellulase A) family. As to quaternary structure, monomer. The cofactor is Mn(2+).

The protein localises to the secreted. The enzyme catalyses Successive hydrolysis of beta-D-glucose units from the non-reducing ends of (1-&gt;3)-beta-D-glucans, releasing alpha-glucose.. Its function is as follows. Beta-glucanases participate in the metabolism of beta-glucan, the main structural component of the cell wall. It could also function biosynthetically as a transglycosylase. The chain is Probable glucan 1,3-beta-glucosidase A (exgA) from Aspergillus fumigatus (strain ATCC MYA-4609 / CBS 101355 / FGSC A1100 / Af293) (Neosartorya fumigata).